Here is a 298-residue protein sequence, read N- to C-terminus: GPN-loop GTPase QQT1 (298 aa).

12–17 (GSGKTT) serves as a coordination point for GTP. Residues 69-71 (GPN) carry the Gly-Pro-Asn (GPN)-loop; involved in dimer interface motif. 173–176 (SKID) contacts GTP.

It belongs to the GPN-loop GTPase family. Heterodimer with QQT2. In terms of tissue distribution, expressed in vascular tissues, root tips, apical and root meristematic regions, and floral primordia.

It is found in the cytoplasm. The protein resides in the nucleus. It localises to the cytoskeleton. The protein localises to the spindle. Its subcellular location is the phragmoplast. Small GTPase that is essential for the correct formation of the tangential divisions in early embryos. Associates with microtubule during mitosis and may function in the positioning of the division plane. May participate in the patterning of the early embryo at the octant-dermatogen transition. Is crucial for normal development of the plant. In Arabidopsis thaliana (Mouse-ear cress), this protein is GPN-loop GTPase QQT1.